Consider the following 52-residue polypeptide: uncharacterized protein (52 aa).

This is an uncharacterized protein from Treponema pallidum (strain Nichols).